The primary structure comprises 69 residues: Conopeptide Y-Fe1 (69 aa).

Residues 1-20 (MSKLGVVLFVFLLLLPLAAP) form the signal peptide. A propeptide spanning residues 21 to 69 (QPVGDQPADQPADRNAEARGTYLYPFSYYRLWRYFTRFLHKQPYYYVHI) is cleaved from the precursor.

Belongs to the conotoxin M superfamily. Conopeptide Y family. In terms of tissue distribution, expressed by the venom duct.

The protein localises to the secreted. In terms of biological role, tyrosine-rich conopeptide that specifically targets voltage-gated potassium channel Kv1.6/KCNA6 (IC(50) is 8.8 uM) that is expressed in Xenopus oocytes. In vivo, causes seizures (at 5 nmol) and death (20 nmol) when intracranially injected into mice, and causes paralysis (at 10 pmol) to C.elegans. This chain is Conopeptide Y-Fe1, found in Conus ferrugineus (Cone snail).